A 352-amino-acid chain; its full sequence is Isoflavone-7-O-methyltransferase 8 (352 aa).

Residue 118–127 (VLDPTLSGSY) participates in substrate binding. Residues Gly-196, Asp-219, Asp-239, Met-240, and Lys-253 each contribute to the S-adenosyl-L-methionine site. His-257 serves as the catalytic Proton acceptor.

The protein belongs to the class I-like SAM-binding methyltransferase superfamily. Cation-independent O-methyltransferase family. COMT subfamily. As to quaternary structure, homodimer.

The catalysed reaction is a 7-hydroxyisoflavone + S-adenosyl-L-methionine = a 7-methoxyisoflavone + S-adenosyl-L-homocysteine + H(+). The protein operates within phytoalexin biosynthesis; medicarpin biosynthesis. In terms of biological role, transfers a methyl group to 7-hydroxyls of the isoflavones daidzein, genistein and 6,7,4'-trihydroxyisoflavone. Can also methylate (+)6a-hydroxymaackiain with lower efficiency. The chain is Isoflavone-7-O-methyltransferase 8 from Medicago sativa (Alfalfa).